Reading from the N-terminus, the 412-residue chain is G-protein coupled receptor homolog UL33 (412 aa).

Over M1–A29 the chain is Virion surface. 3 N-linked (GlcNAc...) asparagine; by host glycosylation sites follow: N7, N18, and N22. A helical membrane pass occupies residues I30–I54. The Intravirion portion of the chain corresponds to T55 to I70. Residues Y71 to W95 form a helical membrane-spanning segment. Over L96–A102 the chain is Virion surface. The chain crosses the membrane as a helical span at residues S103–R129. C104 and C188 are joined by a disulfide. The Intravirion segment spans residues Y130–Y138. A helical membrane pass occupies residues A139 to F160. Topologically, residues S161–S203 are virion surface. N177 and N180 each carry an N-linked (GlcNAc...) asparagine; by host glycan. Residues W204–Y224 traverse the membrane as a helical segment. At A225–S240 the chain is on the intravirion side. A helical membrane pass occupies residues R241–N267. The Virion surface segment spans residues S268 to L281. Residues T282–L305 traverse the membrane as a helical segment. The Intravirion segment spans residues Y306 to V412. Residues N377–V412 form a disordered region. A compositionally biased stretch (polar residues) spans K388–K397.

Belongs to the G-protein coupled receptor 1 family. Heterodimerizes with US28.

It localises to the virion. It is found in the host cell membrane. The protein localises to the host cytoplasm. Its function is as follows. G-protein-coupled receptor (vGPCR) that constitutively activates multiple oncogenic signaling pathways including STAT3, AP-1, phospholipase C, NF-kappa-B or cAMP-responsive element (CRE) pathways. Plays an important role in viral reactivation from latency through activation of host CREB1, facilitating its recruitment to the viral major immediate early (MIE) genes. In turn, expression of the MIE-driven genes such as UL123 are de-repressed. Also facilitates virus dissemination via the extracellular and cell-to-cell route. In Human cytomegalovirus (strain AD169) (HHV-5), this protein is G-protein coupled receptor homolog UL33 (UL33).